Here is a 117-residue protein sequence, read N- to C-terminus: Putative pterin-4-alpha-carbinolamine dehydratase (117 aa).

The protein belongs to the pterin-4-alpha-carbinolamine dehydratase family.

The catalysed reaction is (4aS,6R)-4a-hydroxy-L-erythro-5,6,7,8-tetrahydrobiopterin = (6R)-L-erythro-6,7-dihydrobiopterin + H2O. The protein is Putative pterin-4-alpha-carbinolamine dehydratase of Colwellia psychrerythraea (strain 34H / ATCC BAA-681) (Vibrio psychroerythus).